The primary structure comprises 437 residues: Serine hydroxymethyltransferase (437 aa).

(6S)-5,6,7,8-tetrahydrofolate contacts are provided by residues Leu130 and 134 to 136 (GHL). Position 239 is an N6-(pyridoxal phosphate)lysine (Lys239).

The protein belongs to the SHMT family. In terms of assembly, homodimer. Requires pyridoxal 5'-phosphate as cofactor.

The protein resides in the cytoplasm. The catalysed reaction is (6R)-5,10-methylene-5,6,7,8-tetrahydrofolate + glycine + H2O = (6S)-5,6,7,8-tetrahydrofolate + L-serine. It participates in one-carbon metabolism; tetrahydrofolate interconversion. It functions in the pathway amino-acid biosynthesis; glycine biosynthesis; glycine from L-serine: step 1/1. Functionally, catalyzes the reversible interconversion of serine and glycine with tetrahydrofolate (THF) serving as the one-carbon carrier. This reaction serves as the major source of one-carbon groups required for the biosynthesis of purines, thymidylate, methionine, and other important biomolecules. Also exhibits THF-independent aldolase activity toward beta-hydroxyamino acids, producing glycine and aldehydes, via a retro-aldol mechanism. This chain is Serine hydroxymethyltransferase, found in Bartonella tribocorum (strain CIP 105476 / IBS 506).